Consider the following 5762-residue polypeptide: Mucin-5B (5762 aa).

Residues 1–25 (MGAPSACRTLVLALAAMLVVPQAET) form the signal peptide. The segment at 27 to 50 (GPVEPSWENAGHTMDGGAPTSSPT) is disordered. Residues 75–245 (RVCSTWGDFH…KLDGPTEQCP (171 aa)) form the VWFD 1 domain. Cystine bridges form between Cys77–Cys207 and Cys99–Cys244. Asn145 carries N-linked (GlcNAc...) asparagine glycosylation. Glu194 serves as a coordination point for Cu(2+). 2 N-linked (GlcNAc...) asparagine glycosylation sites follow: Asn201 and Asn254. Cu(2+) contacts are provided by His311 and His358. The TIL 1 domain occupies 329-385 (CPLNMQHQECGSPCTDTCSNPQRAQLCEDHCVDGCFCPPGTVLDDITHSGCLPLGQC). Asn401 carries an N-linked (GlcNAc...) asparagine glycan. The 176-residue stretch at 423–598 (GTCSVQGGAH…NTWKAQAACA (176 aa)) folds into the VWFD 2 domain. 3 cysteine pairs are disulfide-bonded: Cys425/Cys562, Cys447/Cys597, and Cys469/Cys477. Residue Asn515 is glycosylated (N-linked (GlcNAc...) asparagine). 2 TIL domains span residues 695 to 752 (CPKS…AQEC) and 805 to 855 (NSSA…EEDC). N-linked (GlcNAc...) asparagine glycosylation occurs at Asn805. A VWFC 1 domain is found at 855-927 (CPCVHNEATY…EYILAQDYCG (73 aa)). The VWFD 3 domain maps to 893–1062 (GTCVAYGDGH…NSWKLSPSCP (170 aa)). 4 cysteine pairs are disulfide-bonded: Cys895-Cys1026, Cys917-Cys1061, Cys926-Cys1023, and Cys944-Cys951. An N-linked (GlcNAc...) asparagine glycan is attached at Asn929. N-linked (GlcNAc...) asparagine glycosylation is found at Asn1276 and Asn1292. Residues 1333–1432 (CVREVCRWSS…RVLCCEYVPC (100 aa)) form a Cys-rich subdomain 1 repeat. The 7 X Cys-rich subdomain repeats stretch occupies residues 1333-4228 (CVREVCRWSS…RVFCCNYGHC (2896 aa)). A C-linked (Man) tryptophan glycan is attached at Trp1340. 2 disordered regions span residues 1437–1462 (APGTSPQPSLSASTEPAVPTPTQTTA) and 1480–1502 (LTSQTGSSSGPVTVTPSAPGTTT). The span at 1450–1462 (TEPAVPTPTQTTA) shows a compositional bias: low complexity. A Cys-rich subdomain 2 repeat occupies 1503 to 1604 (CQPRCQWTEW…VLCCSDDHCR (102 aa)). The C-linked (Man) tryptophan glycan is linked to Trp1509. Asn1556 is a glycosylation site (N-linked (GlcNAc...) asparagine). The interval 1607-1783 (ATTPPPTTEL…NTTTSQGTTR (177 aa)) is disordered. Low complexity predominate over residues 1614–1624 (TELETATTTTT). 2 stretches are compositionally biased toward polar residues: residues 1625–1638 (QALFSTPQPTSSPG) and 1645–1662 (ASTTAVPTLSEGLTSPRY). Over residues 1663-1684 (TSTLGTATTGGPTTPAGSTEPT) the composition is skewed to low complexity. Residues 1689-1706 (ATSTLPTRSALPGTTGSL) show a composition bias toward polar residues. 2 stretches are compositionally biased toward low complexity: residues 1739-1756 (EPLTTSLAPTLTSELSTS) and 1765-1777 (TETTMSPLTNTTT). The N-linked (GlcNAc...) asparagine glycan is linked to Asn1774. A Cys-rich subdomain 3 repeat occupies 1784 to 1885 (CQPKCEWTEW…VLCCDDYSHC (102 aa)). C-linked (Man) tryptophan glycosylation occurs at Trp1790. Over residues 1890 to 1987 (ATSSTATPSS…TSVTPIPSSS (98 aa)) the composition is skewed to low complexity. Disordered regions lie at residues 1890-2019 (ATSS…TAHT), 2031-2100 (GATG…GTTH), 2114-2211 (TGSM…HTVR), and 2242-2302 (TGTT…SSPT). An 11 X approximate tandem repeats, Ser/Thr-rich region spans residues 1890–2199 (ATSSTATPSS…VPNTMATTHG (310 aa)). Residues 1988 to 1997 (LGTTWTRLSQ) show a composition bias toward polar residues. A compositionally biased stretch (low complexity) spans 1998-2019 (TTTPTATMSTATPSSTPETAHT). Residues 2114–2181 (TGSMATPSSS…TSNTVTPSSA (68 aa)) show a composition bias toward low complexity. Polar residues predominate over residues 2182–2199 (LGTTHTPPVPNTMATTHG). Residues 2313 to 2414 (GCEPQCAWSE…RVFCCNYGHC (102 aa)) form a Cys-rich subdomain 4 repeat. Trp2320 is a glycosylation site (C-linked (Man) tryptophan). Residues 2419–2756 (ATSSTAMPSS…VPNTTATTHG (338 aa)) form an 11 X approximate tandem repeats, Ser/Thr-rich region. Disordered regions lie at residues 2443–2462 (ATTTESTGSTATPSSTPGTT), 2473–2522 (TVTV…ATAL), and 2556–2861 (TTPT…PTSA). Low complexity predominate over residues 2556–2738 (TTPTATMSTA…TSSTVTPSSA (183 aa)). A compositionally biased stretch (polar residues) spans 2739–2786 (LGTTHTPPVPNTTATTHGRSLSPSSPHTVRTAWTSATSGTLGTTHITE). Residue Asn2749 is glycosylated (N-linked (GlcNAc...) asparagine). Over residues 2787–2861 (PSTGTSHTPA…TLLPSSPTSA (75 aa)) the composition is skewed to low complexity. An HAT 1 repeat occupies 2854-2886 (LPSSPTSAPITTVVTMGCEPQCAWSEWLDYSYP). One copy of the Cys-rich subdomain 5 repeat lies at 2871–2971 (CEPQCAWSEW…RVFCCNYGHC (101 aa)). A glycan (C-linked (Man) tryptophan) is linked at Trp2877. The 17 X approximate tandem repeats, Ser/Thr-rich stretch occupies residues 2976–3456 (ATSSTATPSS…VPNTTATTHG (481 aa)). Low complexity-rich tracts occupy residues 3001–3017 (TTTATTGSTAIPSSTPG) and 3026–3049 (TSTATTPTATSSKATSSSSPRTAT). Disordered stretches follow at residues 3001–3049 (TTTA…RTAT), 3256–3357 (TTPT…GTTH), 3371–3469 (TGSM…TVRT), and 3481–3561 (TTHI…PTSA). Low complexity predominate over residues 3371–3438 (TGSMATPSSS…TSSTVTPSSA (68 aa)). A compositionally biased stretch (polar residues) spans 3439–3456 (LGTTHTPPVPNTTATTHG). Asn3449 carries an N-linked (GlcNAc...) asparagine glycan. The segment covering 3487–3561 (PSTVTSHTPA…TLLPSSPTSA (75 aa)) has biased composition (low complexity). An HAT 2 repeat occupies 3554–3586 (LPSSPTSAPITTVVTTGCEPQCAWSEWLDYSYP). One copy of the Cys-rich subdomain 6 repeat lies at 3571–3671 (CEPQCAWSEW…RVFCCNYGHC (101 aa)). Trp3577 carries a C-linked (Man) tryptophan glycan. An 11 X approximate tandem repeats, Ser/Thr-rich region spans residues 3676 to 4013 (ATSSTATPSS…VPNTTATTHG (338 aa)). Disordered stretches follow at residues 3699–3779 (TATT…ATAL), 3813–3917 (TTPT…HTPT), and 3956–4118 (ATGS…PTSA). Positions 3956–3995 (ATGSTTNPSSTPGTTPIPPVLTTTATTPAATSSTVTPSSA) are enriched in low complexity. Over residues 3996-4043 (LGTTHTPPVPNTTATTHGRSLSPSSPHTVRTAWTSATSGTLGTTHITE) the composition is skewed to polar residues. Asn4006 carries an N-linked (GlcNAc...) asparagine glycan. The segment covering 4044–4118 (PSTGTSHTPA…TLLPSSPTSA (75 aa)) has biased composition (low complexity). The stretch at 4111-4143 (LPSSPTSAPITTVVTTGCEPQCAWSEWLDYSYP) is one HAT 3 repeat. Residues 4128 to 4228 (CEPQCAWSEW…RVFCCNYGHC (101 aa)) form a Cys-rich subdomain 7 repeat. C-linked (Man) tryptophan glycosylation is present at Trp4134. The segment at 4233–4879 (ATSSTAMPSS…TLGTAHTPKV (647 aa)) is 23 X approximate tandem repeats, Ser/Thr-rich. 2 stretches are compositionally biased toward low complexity: residues 4259–4274 (TTASTGSTATPSSTPG) and 4283–4389 (TSPA…PGTT). Disordered stretches follow at residues 4259-4389 (TTAS…PGTT), 4428-4447 (ATTTASTGSTATPSSTPGTT), 4458-4527 (TVTV…AIPS), and 4541-4750 (TTPT…ATSF). N-linked (GlcNAc...) asparagine glycans are attached at residues Asn4804, Asn4960, Asn5017, Asn5024, Asn5046, Asn5096, and Asn5111. Residues 5073 to 5261 (CICSMWGGSH…VPDSRKDGCW (189 aa)) enclose the VWFD 4 domain. 3 cysteine pairs are disulfide-bonded: Cys5075–Cys5221, Cys5097–Cys5260, and Cys5121–Cys5132. Asn5215 carries an N-linked (GlcNAc...) asparagine glycan. A VWFC 2 domain is found at 5412 to 5484 (CPCVGPDGFP…NPCCPETVCV (73 aa)). Residues Asn5486, Asn5526, Asn5565, Asn5566, Asn5602, Asn5612, Asn5663, Asn5677, and Asn5721 are each glycosylated (N-linked (GlcNAc...) asparagine). A VWFC 3 domain is found at 5521 to 5587 (QLCSYNGTFY…VAGQCCGECV (67 aa)). 4 disulfide bridges follow: Cys5653-Cys5705, Cys5672-Cys5719, Cys5681-Cys5735, and Cys5685-Cys5737. The CTCK domain occupies 5653–5742 (CEEDSCQVRI…DECGCTPFCV (90 aa)).

In terms of assembly, homomultimer; disulfide-linked. The N- and C-terminus mediate their assembly into higher order structures to form filaments. The CTCK domains of two polypeptides associate in the endoplasmic reticulum to generate intermolecularly disulfide-bonded dimers. These dimers progress to the Golgi apparatus, which is a more acidic environment than the endoplasmic reticulum. Under acidic conditions, the N-termini form non-covalent intermolecular interactions that juxtapose assemblies from different CTCK-linked dimers to produce long, disulfide-linked polymers that remain highly compact until secretion. Post-translationally, highly glycosylated. C-, N- and O-glycosylated. C-mannosylated in the Cys-rich subdomains probably on the first Trp residue of the WXXW motif. Highly O-glycosylated in the Ser/Thr-rich tandem repeat (TR) region. The repeat region is about 59% O-glycosylated with a high abundance of NeuAc(2)Hex(1)HexNac1-ol. As to expression, expressed on surface airway epithelia. Expressed mainly in mucous cells of submucosal glands of airway tissues. Highly expressed in the sublingual gland. Also found in submaxillary glands, endocervix, gall bladder, and pancreas.

Its subcellular location is the secreted. Its function is as follows. Gel-forming mucin that is thought to contribute to the lubricating and viscoelastic properties of whole saliva and cervical mucus. This chain is Mucin-5B (MUC5B), found in Homo sapiens (Human).